Here is a 417-residue protein sequence, read N- to C-terminus: GTP-binding protein YPT11 (417 aa).

Residues 1-34 (MSQRKRYSLNVVTSPSIPSPTPSAPIRTNESNWE) are disordered. Residues 97-104 (GDANVGKT), 228-232 (DTAGQ), and 292-295 (NKID) each bind GTP. S-geranylgeranyl cysteine attachment occurs at residues Cys-415 and Cys-416.

This sequence belongs to the small GTPase superfamily. Rab family. As to quaternary structure, interacts with MYO2 (via C-terminal tail domain). Interacts with YIF1, YIP3, YIP4 and YIP5.

The protein resides in the endoplasmic reticulum membrane. The protein localises to the bud tip. Its subcellular location is the bud neck. In terms of biological role, involved in the positive control of both endoplasmic reticulum (ER) and mitochondrion inheritance during cell divison. Required for the MYO2-dependent retention of newly inherited mitochondria at the bud tip in developing daughter cells. This is GTP-binding protein YPT11 (YPT11) from Saccharomyces cerevisiae (strain AWRI1631) (Baker's yeast).